The following is a 483-amino-acid chain: Protein LMBR1L (483 aa).

The Extracellular portion of the chain corresponds to 1 to 21; that stretch reads MEVNQDVSVREQIFHDWVREC. A helical membrane pass occupies residues 22-42; sequence IICSLLFSTLYLLSYIVITKF. Over 43–60 the chain is Cytoplasmic; that stretch reads KKHADFATVDVEDAAVNR. A helical transmembrane segment spans residues 61–81; that stretch reads IALWMCTFTLAVSVGAVLLLP. Residues 82–112 are Extracellular-facing; the sequence is FSIISNEVLLSVPHNYYIQWLNGSLIHGLWN. A helical transmembrane segment spans residues 113–133; the sequence is LVFLFSNLSLVFLMPFAYLFT. The Cytoplasmic segment spans residues 134-153; that stretch reads EAEGFAGSKKGVMSRVYETT. Residues 154-174 traverse the membrane as a helical segment; the sequence is VVLLLLTLLVFGIVWVASAIF. At 175–194 the chain is on the extracellular side; that stretch reads DDDSAGRESLYDLWEYYLPY. Residues 195 to 215 traverse the membrane as a helical segment; the sequence is LYSGISLFGVLLLLLCTPFGL. The Cytoplasmic portion of the chain corresponds to 216–294; sequence SRMFSVTGNL…RRRASPWQRN (79 aa). Residues 295–315 traverse the membrane as a helical segment; it reads LVYPLAMLLLLALTGITVLIV. Residues 316–342 lie on the Extracellular side of the membrane; sequence CVNVLELLIDEAAMPKGIQGSQLGKVS. Residues 343 to 363 form a helical membrane-spanning segment; it reads FSVFGSFGAAVQVILIFYLMA. Residues 364–386 lie on the Cytoplasmic side of the membrane; that stretch reads SSVVGFYSSPLFIQLLPQKQNTP. The chain crosses the membrane as a helical span at residues 387–407; it reads MTKIIGNCVSLLILSSALPVF. Topologically, residues 408 to 429 are extracellular; the sequence is SRTLGITRFDLLGDFGRFNWLG. Residues 430-450 form a helical membrane-spanning segment; it reads NFYLILLYNMMFAGLATLCLV. Residues 451 to 483 lie on the Cytoplasmic side of the membrane; it reads KKFTWAVQAELIRAFGLDRLPLSVKKIRSQGKA.

This sequence belongs to the LIMR family. Dimer. Can also form higher oligomers.

It is found in the cell membrane. Its subcellular location is the endoplasmic reticulum membrane. Its function is as follows. May play a role in lymphocyte development by negatively regulating the canonical Wnt signaling pathway. May act as a LCN1 receptor. This is Protein LMBR1L (lmbr1l) from Xenopus laevis (African clawed frog).